We begin with the raw amino-acid sequence, 421 residues long: Anhydromevalonate phosphate decarboxylase (421 aa).

The Mn(2+) site is built by asparagine 131 and glutamate 194. Catalysis depends on aspartate 240, which acts as the Proton acceptor.

The protein belongs to the UbiD family. The cofactor is prenylated FMN. Mn(2+) serves as cofactor.

It carries out the reaction (2E)-3-methyl-5-phosphooxypent-2-enoate + H(+) = isopentenyl phosphate + CO2. The protein operates within isoprenoid biosynthesis; isopentenyl diphosphate biosynthesis via mevalonate pathway. Catalyzes the conversion of trans-anhydromevalonate 5-phosphate (tAHMP) into isopentenyl phosphate. Involved in the archaeal mevalonate (MVA) pathway, which provides fundamental precursors for isoprenoid biosynthesis, such as isopentenyl diphosphate (IPP) and dimethylallyl diphosphate (DMAPP). This chain is Anhydromevalonate phosphate decarboxylase, found in Methanocaldococcus jannaschii (strain ATCC 43067 / DSM 2661 / JAL-1 / JCM 10045 / NBRC 100440) (Methanococcus jannaschii).